A 307-amino-acid polypeptide reads, in one-letter code: Oxygen-dependent coproporphyrinogen-III oxidase (307 aa).

A substrate-binding site is contributed by serine 99. Residues histidine 103 and histidine 113 each contribute to the a divalent metal cation site. Catalysis depends on histidine 113, which acts as the Proton donor. 115–117 (NVR) contacts substrate. A divalent metal cation is bound by residues histidine 152 and histidine 182. Residues 247-282 (YVEFNLVFDRGTLFGLQSGGRTESILMSMPPVANWR) are important for dimerization. 265-267 (GGR) provides a ligand contact to substrate.

The protein belongs to the aerobic coproporphyrinogen-III oxidase family. Homodimer. The cofactor is a divalent metal cation.

It is found in the cytoplasm. The enzyme catalyses coproporphyrinogen III + O2 + 2 H(+) = protoporphyrinogen IX + 2 CO2 + 2 H2O. It participates in porphyrin-containing compound metabolism; protoporphyrin-IX biosynthesis; protoporphyrinogen-IX from coproporphyrinogen-III (O2 route): step 1/1. In terms of biological role, involved in the heme biosynthesis. Catalyzes the aerobic oxidative decarboxylation of propionate groups of rings A and B of coproporphyrinogen-III to yield the vinyl groups in protoporphyrinogen-IX. In Burkholderia multivorans (strain ATCC 17616 / 249), this protein is Oxygen-dependent coproporphyrinogen-III oxidase.